Reading from the N-terminus, the 211-residue chain is Secreted phosphoprotein 24 (211 aa).

The N-terminal stretch at 1 to 29 is a signal peptide; the sequence is MISRMEKMTMMMKILIMFALGMNYWSCSG. 2 cysteine pairs are disulfide-bonded: C92/C103 and C116/C134. Phosphoserine is present on S96. Phosphoserine is present on residues S145, S146, S170, S173, and S182.

The protein belongs to the SPP2 family. Phosphorylation sites are present in the extracellular medium. In terms of tissue distribution, detected in liver and plasma.

It is found in the secreted. Its function is as follows. Could coordinate an aspect of bone turnover. The chain is Secreted phosphoprotein 24 (SPP2) from Homo sapiens (Human).